The following is a 328-amino-acid chain: GTP cyclohydrolase MptA (328 aa).

The protein belongs to the GTP cyclohydrolase IV family. Homodimer. Requires Fe(2+) as cofactor.

The enzyme catalyses GTP + H2O = 7,8-dihydroneopterin 2',3'-cyclic phosphate + formate + diphosphate + H(+). It functions in the pathway cofactor biosynthesis; 5,6,7,8-tetrahydromethanopterin biosynthesis. Converts GTP to 7,8-dihydro-D-neopterin 2',3'-cyclic phosphate, the first intermediate in the biosynthesis of coenzyme methanopterin. The sequence is that of GTP cyclohydrolase MptA from Methanospirillum hungatei JF-1 (strain ATCC 27890 / DSM 864 / NBRC 100397 / JF-1).